Here is a 453-residue protein sequence, read N- to C-terminus: MQARALLLAALAALALAREPPAAPCPARCDVSRCPSPRCPGGYVPDLCNCCLVCAASEGEPCGGPLDSPCGESLECVRGLCRCRWSHAVCGTDGHTYANVCALQAASRRALQLSGTPVRQLQKGACPLGLHQLSSPRYKFNFIADVVEKIAPAVVHIELFLRHPLFGRNVPLSSGSGFIMSEAGLIITNAHVVSSNSAAPGRQQLKVQLQNGDSYEATIKDIDKKSDIATIKIHPKKKLPVLLLGHSADLRPGEFVVAIGSPFALQNTVTTGIVSTAQREGRELGLRDSDMDYIQTDAIINYGNSGGPLVNLDGEVIGINTLKVTAGISFAIPSDRITRFLTEFQDKQIKDWKKRFIGIRMRTITPSLVDELKASNPDFPEVSSGIYVQEVAPNSPSQRGGIQDGDIIVKVNGRPLVDSSELQEAVLTESPLLLEVRRGNDDLLFSIAPEVVM.

Positions 1 to 17 (MQARALLLAALAALALA) are cleaved as a signal peptide. An IGFBP N-terminal domain is found at 21-84 (PAAPCPARCD…ECVRGLCRCR (64 aa)). Cystine bridges form between Cys25/Cys48, Cys29/Cys50, Cys34/Cys51, Cys39/Cys54, Cys62/Cys76, Cys70/Cys81, Cys83/Cys101, and Cys90/Cys126. The Kazal-like domain occupies 64 to 128 (GPLDSPCGES…RQLQKGACPL (65 aa)). A serine protease region spans residues 175-340 (GSGFIMSEAG…AIPSDRITRF (166 aa)). Residues His191, Asp227, and Ser305 each act as charge relay system in the active site. The region spanning 359–444 (IRMRTITPSL…EVRRGNDDLL (86 aa)) is the PDZ domain.

This sequence belongs to the peptidase S1C family. As to quaternary structure, homotrimer. Interacts with TGFB1; the interaction inhibits TGFB-mediated signaling. Interacts with BMP4; the interaction inhibits BMP4-mediated signaling. Interacts with TGFB2 and GDF5. Interacts with MYH9. In terms of tissue distribution, widely expressed, with highest levels in both adult and fetal heart, ovary, uterus placenta, and bladder. In the endometrium, expressed in epithelial glands and the stroma. Also present in leukocytes. Isoform 1 is predominant in heart and skeletal muscle, whereas isoform 2 is predominant in placenta and kidney.

It localises to the secreted. Its function is as follows. Serine protease that cleaves beta-casein/CSN2 as well as several extracellular matrix (ECM) proteoglycans such as decorin/DCN, biglycan/BGN and fibronectin/FN1. Inhibits signaling mediated by TGF-beta family proteins possibly indirectly by degradation of these ECM proteoglycans. May act as a tumor suppressor. Negatively regulates, in vitro, trophoblast invasion during placental development and may be involved in the development of the placenta in vivo. May also have a role in ovarian development, granulosa cell differentiation and luteinization. This chain is Serine protease HTRA3 (HTRA3), found in Homo sapiens (Human).